The following is a 163-amino-acid chain: Crossover junction endodeoxyribonuclease RuvC (163 aa).

Active-site residues include aspartate 8, glutamate 68, and aspartate 140. Aspartate 8, glutamate 68, and aspartate 140 together coordinate Mg(2+).

It belongs to the RuvC family. Homodimer which binds Holliday junction (HJ) DNA. The HJ becomes 2-fold symmetrical on binding to RuvC with unstacked arms; it has a different conformation from HJ DNA in complex with RuvA. In the full resolvosome a probable DNA-RuvA(4)-RuvB(12)-RuvC(2) complex forms which resolves the HJ. The cofactor is Mg(2+).

It localises to the cytoplasm. It catalyses the reaction Endonucleolytic cleavage at a junction such as a reciprocal single-stranded crossover between two homologous DNA duplexes (Holliday junction).. Functionally, the RuvA-RuvB-RuvC complex processes Holliday junction (HJ) DNA during genetic recombination and DNA repair. Endonuclease that resolves HJ intermediates. Cleaves cruciform DNA by making single-stranded nicks across the HJ at symmetrical positions within the homologous arms, yielding a 5'-phosphate and a 3'-hydroxyl group; requires a central core of homology in the junction. The consensus cleavage sequence is 5'-(A/T)TT(C/G)-3'. Cleavage occurs on the 3'-side of the TT dinucleotide at the point of strand exchange. HJ branch migration catalyzed by RuvA-RuvB allows RuvC to scan DNA until it finds its consensus sequence, where it cleaves and resolves the cruciform DNA. The chain is Crossover junction endodeoxyribonuclease RuvC from Erythrobacter litoralis (strain HTCC2594).